Reading from the N-terminus, the 184-residue chain is Uroplakin-2 (184 aa).

An N-terminal signal peptide occupies residues 1–25 (MAPLLPIRTLPLILILLALLSPGAA). Residues 26–84 (DFNISSLSGLLSPALTESLLVALPPCHLTGGNATLMVRRANDSKVVTSSFVVPPCRGRR) constitute a propeptide that is removed on maturation. 3 N-linked (GlcNAc...) asparagine glycosylation sites follow: asparagine 28, asparagine 57, and asparagine 66. The Lumenal portion of the chain corresponds to 85–155 (ELVSVVDSGA…IGLGMARTGG (71 aa)). Residues 156–176 (MVVITVLLSVAMFLLVLGFII) traverse the membrane as a helical segment. The Cytoplasmic segment spans residues 177–184 (ALALGSRK).

The protein belongs to the uroplakin-2 family. As to quaternary structure, interacts with uroplakin-1a (UPK1A). Expressed in ureter.

It localises to the cell membrane. Functionally, component of the asymmetric unit membrane (AUM); a highly specialized biomembrane elaborated by terminally differentiated urothelial cells. May play an important role in regulating the assembly of the AUM. The chain is Uroplakin-2 (UPK2) from Homo sapiens (Human).